Reading from the N-terminus, the 360-residue chain is Peptide chain release factor 1 (360 aa).

Q235 carries the N5-methylglutamine modification. The span at K285–R308 shows a compositional bias: basic and acidic residues. Positions K285 to P313 are disordered.

This sequence belongs to the prokaryotic/mitochondrial release factor family. Post-translationally, methylated by PrmC. Methylation increases the termination efficiency of RF1.

It is found in the cytoplasm. Peptide chain release factor 1 directs the termination of translation in response to the peptide chain termination codons UAG and UAA. In Photorhabdus laumondii subsp. laumondii (strain DSM 15139 / CIP 105565 / TT01) (Photorhabdus luminescens subsp. laumondii), this protein is Peptide chain release factor 1.